A 65-amino-acid polypeptide reads, in one-letter code: Antitoxin VapB32 (65 aa).

Positions 46–65 are disordered; the sequence is ALGGTDPQATAAPRRRTSPR.

Antitoxin component of a type II toxin-antitoxin (TA) system. The chain is Antitoxin VapB32 (vapB32) from Mycobacterium tuberculosis (strain CDC 1551 / Oshkosh).